Reading from the N-terminus, the 418-residue chain is Serine protease inhibitor A3M (418 aa).

Positions Met-1–Cys-20 are cleaved as a signal peptide. Residues Asn-104, Asn-184, and Asn-269 are each glycosylated (N-linked (GlcNAc...) asparagine). The segment at Gly-367–Phe-392 is RCL.

This sequence belongs to the serpin family. Expressed in liver and testis.

Its subcellular location is the secreted. This is Serine protease inhibitor A3M (Serpina3m) from Mus musculus (Mouse).